The chain runs to 109 residues: uncharacterized protein (109 aa).

3 consecutive transmembrane segments (helical) span residues 16 to 36 (HPHL…EIYF), 52 to 72 (LIVL…LIAL), and 87 to 107 (ILLC…AYPV).

Its subcellular location is the cell membrane. This is an uncharacterized protein from Salmonella typhimurium (strain LT2 / SGSC1412 / ATCC 700720).